Here is a 326-residue protein sequence, read N- to C-terminus: Adenosine receptor A1 (326 aa).

Residues M1–A10 are Extracellular-facing. The helical transmembrane segment at A11–A33 threads the bilayer. Residues V34 to C46 are Cytoplasmic-facing. The helical transmembrane segment at F47–I69 threads the bilayer. Residues N70–C80 lie on the Extracellular side of the membrane. The cysteines at positions 80 and 169 are disulfide-linked. A helical membrane pass occupies residues L81–A102. Topologically, residues V103–R123 are cytoplasmic. The chain crosses the membrane as a helical span at residues A124–W146. Over N147 to S176 the chain is Extracellular. N-linked (GlcNAc...) asparagine glycosylation occurs at N159. The helical transmembrane segment at M177–L201 threads the bilayer. The Cytoplasmic portion of the chain corresponds to E202–S235. A helical membrane pass occupies residues L236–F259. At C260–S267 the chain is on the extracellular side. The helical transmembrane segment at I268 to I292 threads the bilayer. Over Q293–D326 the chain is Cytoplasmic. Residue C309 is the site of S-palmitoyl cysteine attachment.

This sequence belongs to the G-protein coupled receptor 1 family.

The protein resides in the cell membrane. Receptor for adenosine. The activity of this receptor is mediated by G proteins which inhibit adenylyl cyclase. In Canis lupus familiaris (Dog), this protein is Adenosine receptor A1 (ADORA1).